Consider the following 307-residue polypeptide: Elongation factor Ts (307 aa).

Residues 80 to 83 form an involved in Mg(2+) ion dislocation from EF-Tu region; that stretch reads TDFV.

The protein belongs to the EF-Ts family.

The protein resides in the cytoplasm. Functionally, associates with the EF-Tu.GDP complex and induces the exchange of GDP to GTP. It remains bound to the aminoacyl-tRNA.EF-Tu.GTP complex up to the GTP hydrolysis stage on the ribosome. This is Elongation factor Ts (tsf) from Zymomonas mobilis subsp. mobilis (strain ATCC 31821 / ZM4 / CP4).